Here is a 38-residue protein sequence, read N- to C-terminus: Photosystem II reaction center protein L (38 aa).

A helical transmembrane segment spans residues 17–37 (SLYWGLLLIFVLAVSFSNYFF).

Belongs to the PsbL family. As to quaternary structure, PSII is composed of 1 copy each of membrane proteins PsbA, PsbB, PsbC, PsbD, PsbE, PsbF, PsbH, PsbI, PsbJ, PsbK, PsbL, PsbM, PsbT, PsbX, PsbY, PsbZ, Psb30/Ycf12, at least 3 peripheral proteins of the oxygen-evolving complex and a large number of cofactors. It forms dimeric complexes.

Its subcellular location is the plastid membrane. Functionally, one of the components of the core complex of photosystem II (PSII). PSII is a light-driven water:plastoquinone oxidoreductase that uses light energy to abstract electrons from H(2)O, generating O(2) and a proton gradient subsequently used for ATP formation. It consists of a core antenna complex that captures photons, and an electron transfer chain that converts photonic excitation into a charge separation. This subunit is found at the monomer-monomer interface and is required for correct PSII assembly and/or dimerization. The sequence is that of Photosystem II reaction center protein L from Aneura mirabilis (Parasitic liverwort).